Consider the following 389-residue polypeptide: RHOMBOID-like protein 1 (389 aa).

A run of 7 helical transmembrane segments spans residues 56-76 (PWLV…SMFI), 136-156 (IWLH…IFIG), 163-183 (FGFV…SLLS), 191-211 (ISVG…SELL), 221-241 (FAAL…GILP), 244-264 (DNFA…VFLI), and 295-315 (VLWI…LVVL). Ser-196 serves as the catalytic Nucleophile. Catalysis depends on His-248, which acts as the Charge relay system.

Belongs to the peptidase S54 family. Expressed in roots, seedlings, leaves, stems and flowers.

It localises to the golgi apparatus membrane. It carries out the reaction Cleaves type-1 transmembrane domains using a catalytic dyad composed of serine and histidine that are contributed by different transmembrane domains.. In terms of biological role, probable rhomboid-type serine protease that catalyzes intramembrane proteolysis. Unable to cleave the Drosophila protein Spitz. This is RHOMBOID-like protein 1 from Arabidopsis thaliana (Mouse-ear cress).